A 309-amino-acid chain; its full sequence is 4-hydroxy-3-methylbut-2-enyl diphosphate reductase (309 aa).

Cys-12 is a [4Fe-4S] cluster binding site. Residues His-41 and His-74 each coordinate (2E)-4-hydroxy-3-methylbut-2-enyl diphosphate. Residues His-41 and His-74 each coordinate dimethylallyl diphosphate. 2 residues coordinate isopentenyl diphosphate: His-41 and His-74. Residue Cys-96 participates in [4Fe-4S] cluster binding. Position 124 (His-124) interacts with (2E)-4-hydroxy-3-methylbut-2-enyl diphosphate. His-124 is a dimethylallyl diphosphate binding site. His-124 serves as a coordination point for isopentenyl diphosphate. The active-site Proton donor is Glu-126. Residue Thr-167 coordinates (2E)-4-hydroxy-3-methylbut-2-enyl diphosphate. Cys-197 provides a ligand contact to [4Fe-4S] cluster. Residues Ser-225, Ser-226, Asn-227, and Ser-269 each contribute to the (2E)-4-hydroxy-3-methylbut-2-enyl diphosphate site. Dimethylallyl diphosphate-binding residues include Ser-225, Ser-226, Asn-227, and Ser-269. Residues Ser-225, Ser-226, Asn-227, and Ser-269 each contribute to the isopentenyl diphosphate site.

Belongs to the IspH family. [4Fe-4S] cluster serves as cofactor.

It catalyses the reaction isopentenyl diphosphate + 2 oxidized [2Fe-2S]-[ferredoxin] + H2O = (2E)-4-hydroxy-3-methylbut-2-enyl diphosphate + 2 reduced [2Fe-2S]-[ferredoxin] + 2 H(+). The enzyme catalyses dimethylallyl diphosphate + 2 oxidized [2Fe-2S]-[ferredoxin] + H2O = (2E)-4-hydroxy-3-methylbut-2-enyl diphosphate + 2 reduced [2Fe-2S]-[ferredoxin] + 2 H(+). The protein operates within isoprenoid biosynthesis; dimethylallyl diphosphate biosynthesis; dimethylallyl diphosphate from (2E)-4-hydroxy-3-methylbutenyl diphosphate: step 1/1. It functions in the pathway isoprenoid biosynthesis; isopentenyl diphosphate biosynthesis via DXP pathway; isopentenyl diphosphate from 1-deoxy-D-xylulose 5-phosphate: step 6/6. In terms of biological role, catalyzes the conversion of 1-hydroxy-2-methyl-2-(E)-butenyl 4-diphosphate (HMBPP) into a mixture of isopentenyl diphosphate (IPP) and dimethylallyl diphosphate (DMAPP). Acts in the terminal step of the DOXP/MEP pathway for isoprenoid precursor biosynthesis. This chain is 4-hydroxy-3-methylbut-2-enyl diphosphate reductase, found in Colwellia psychrerythraea (strain 34H / ATCC BAA-681) (Vibrio psychroerythus).